Here is a 133-residue protein sequence, read N- to C-terminus: Small ribosomal subunit protein uS8 (133 aa).

This sequence belongs to the universal ribosomal protein uS8 family. As to quaternary structure, part of the 30S ribosomal subunit.

In terms of biological role, one of the primary rRNA binding proteins, it binds directly to 16S rRNA central domain where it helps coordinate assembly of the platform of the 30S subunit. This chain is Small ribosomal subunit protein uS8, found in Metallosphaera sedula (strain ATCC 51363 / DSM 5348 / JCM 9185 / NBRC 15509 / TH2).